Reading from the N-terminus, the 154-residue chain is Transcriptional repressor NrdR (154 aa).

Residues 3-34 (CPHCHKNGSRVVDSRPSEDGSFIRRRRECIHC) fold into a zinc finger. The ATP-cone domain occupies 49 to 139 (LLVIKKDGTR…VYRQFKDVDA (91 aa)).

The protein belongs to the NrdR family. Zn(2+) is required as a cofactor.

Its function is as follows. Negatively regulates transcription of bacterial ribonucleotide reductase nrd genes and operons by binding to NrdR-boxes. The sequence is that of Transcriptional repressor NrdR from Limosilactobacillus reuteri (strain DSM 20016) (Lactobacillus reuteri).